A 285-amino-acid polypeptide reads, in one-letter code: Bifunctional protein FolD (285 aa).

Residues 166-168 (GAS), S191, and I232 each bind NADP(+).

It belongs to the tetrahydrofolate dehydrogenase/cyclohydrolase family. Homodimer.

The enzyme catalyses (6R)-5,10-methylene-5,6,7,8-tetrahydrofolate + NADP(+) = (6R)-5,10-methenyltetrahydrofolate + NADPH. It catalyses the reaction (6R)-5,10-methenyltetrahydrofolate + H2O = (6R)-10-formyltetrahydrofolate + H(+). It functions in the pathway one-carbon metabolism; tetrahydrofolate interconversion. Functionally, catalyzes the oxidation of 5,10-methylenetetrahydrofolate to 5,10-methenyltetrahydrofolate and then the hydrolysis of 5,10-methenyltetrahydrofolate to 10-formyltetrahydrofolate. The sequence is that of Bifunctional protein FolD from Edwardsiella ictaluri (strain 93-146).